A 198-amino-acid polypeptide reads, in one-letter code: FMN-dependent NADH:quinone oxidoreductase (198 aa).

FMN is bound at residue 92–95; it reads MWNL.

This sequence belongs to the azoreductase type 1 family. Homodimer. The cofactor is FMN.

The enzyme catalyses 2 a quinone + NADH + H(+) = 2 a 1,4-benzosemiquinone + NAD(+). It carries out the reaction N,N-dimethyl-1,4-phenylenediamine + anthranilate + 2 NAD(+) = 2-(4-dimethylaminophenyl)diazenylbenzoate + 2 NADH + 2 H(+). Quinone reductase that provides resistance to thiol-specific stress caused by electrophilic quinones. Functionally, also exhibits azoreductase activity. Catalyzes the reductive cleavage of the azo bond in aromatic azo compounds to the corresponding amines. This chain is FMN-dependent NADH:quinone oxidoreductase, found in Lachnoclostridium phytofermentans (strain ATCC 700394 / DSM 18823 / ISDg) (Clostridium phytofermentans).